We begin with the raw amino-acid sequence, 193 residues long: Acyl carrier protein phosphodiesterase (193 aa).

Belongs to the AcpH family.

The catalysed reaction is holo-[ACP] + H2O = apo-[ACP] + (R)-4'-phosphopantetheine + H(+). In terms of biological role, converts holo-ACP to apo-ACP by hydrolytic cleavage of the phosphopantetheine prosthetic group from ACP. This is Acyl carrier protein phosphodiesterase from Klebsiella pneumoniae (strain 342).